A 437-amino-acid polypeptide reads, in one-letter code: MPVSRVKVKNRHLKKKTKKPLAFYKPTTKFVGAVLIAGTLTTTHELLLQQTSPMVQAATNSSEAFIESIAASAKPVADANGLYPSVMIAQAILESNWGSSQLSRAPYYNLFGIQGTYQGKSVVFKTQEYLNGKWVTKDMPFRVYPSFNQSFQDNTYVLKTTNFGNGPYYAKAWRANAATYQDATAALTGKYATDPSYGASLNRIISQYNLTRFDGASSAGNTNSGGSTTTNTNNNSGTNSSSTTYTVKSGDTLWGISQRYGISVAQIQSANNLKSTIIYIGQKLLLTGSASSTNSGGSNNSASTTPTTSVTPAKPASQTSVKVKSGDTLWALSVKYKTSIAQLKSWNHLSSDTIYIGQNLIVSQSAATSNPSTGSGSTATNNSNSTSSNSNASIHKVVKGDTLWGLSQKSGSPIASIKAWNHLSSDTILIGQYLRIK.

A signal peptide spans 1–57 (MPVSRVKVKNRHLKKKTKKPLAFYKPTTKFVGAVLIAGTLTTTHELLLQQTSPMVQA). 3 disordered regions span residues 217–244 (SSAG…SSTT), 291–319 (SSTN…ASQT), and 367–392 (ATSN…NSNA). The region spanning 243–286 (TTYTVKSGDTLWGISQRYGISVAQIQSANNLKSTIIYIGQKLLL) is the LysM 1 domain. The segment covering 291–317 (SSTNSGGSNNSASTTPTTSVTPAKPAS) has biased composition (low complexity). In terms of domain architecture, LysM 2 spans 319–362 (TSVKVKSGDTLWALSVKYKTSIAQLKSWNHLSSDTIYIGQNLIV). A LysM 3 domain is found at 393 to 436 (SIHKVVKGDTLWGLSQKSGSPIASIKAWNHLSSDTILIGQYLRI).

The protein belongs to the glycosyl hydrolase 73 family.

It is found in the secreted. It carries out the reaction Hydrolysis of (1-&gt;4)-beta-linkages between N-acetylmuramic acid and N-acetyl-D-glucosamine residues in a peptidoglycan and between N-acetyl-D-glucosamine residues in chitodextrins.. Functionally, hydrolyzes the cell wall of L.lactis and M.lysodeikticus. Required for cell separation during growth. This chain is Probable N-acetylmuramidase (acmA), found in Lactococcus lactis subsp. cremoris (Streptococcus cremoris).